The following is a 395-amino-acid chain: Immediate-early protein ICP-46 (395 aa).

Belongs to the IIV-6 393L family.

This chain is Immediate-early protein ICP-46 (ICR489), found in Dryophytes versicolor (chameleon treefrog).